A 644-amino-acid chain; its full sequence is Exoribonuclease 2 (644 aa).

The 328-residue stretch at 189–516 (REDLTSLDFV…NHRLLKAVIK (328 aa)) folds into the RNB domain. In terms of domain architecture, S1 motif spans 561-643 (GTRFAAEIVD…ETRSIIARPV (83 aa)).

This sequence belongs to the RNR ribonuclease family. RNase II subfamily.

The protein resides in the cytoplasm. It catalyses the reaction Exonucleolytic cleavage in the 3'- to 5'-direction to yield nucleoside 5'-phosphates.. Functionally, involved in mRNA degradation. Hydrolyzes single-stranded polyribonucleotides processively in the 3' to 5' direction. The protein is Exoribonuclease 2 of Shigella flexneri.